Consider the following 86-residue polypeptide: Large ribosomal subunit protein eL43 (86 aa).

A C4-type zinc finger spans residues Cys-38–Cys-59.

The protein belongs to the eukaryotic ribosomal protein eL43 family. It depends on Zn(2+) as a cofactor.

The polypeptide is Large ribosomal subunit protein eL43 (Thermococcus onnurineus (strain NA1)).